Here is a 1614-residue protein sequence, read N- to C-terminus: Chitin synthase csmA (1614 aa).

The interval 1–22 (MAGPAPSGRTPSHAQSSLPSLP) is disordered. Positions 1-788 (MAGPAPSGRT…CWADLAKLGE (788 aa)) constitute a Myosin motor domain. Residues 9 to 19 (RTPSHAQSSLP) are compositionally biased toward polar residues. Residue 105–112 (GESGSGKT) coordinates ATP. The tract at residues 600–650 (QVSSKPMRMPSMARRKAGPSRLAFDAPEGDDQDEYDSQAGSMSKSSARRKS) is disordered. Residues 626–635 (PEGDDQDEYD) show a composition bias toward acidic residues. The interval 668–692 (LDIVSKCLNSANLNPYFVFCLKPND) is actin-binding. 2 helical membrane passes run 898–918 (WMAI…KTFG) and 937–957 (LIIW…PGLI). One can recognise a Cytochrome b5 heme-binding domain in the interval 961–1020 (QHVYSTAELSSHNGKDGHNSFVAIRGIVFNLDKFMPSHYPDIVPEKSLKKYAGTDATGLF). 2 N-linked (GlcNAc...) asparagine glycosylation sites follow: Asn1047 and Asn1072. A helical membrane pass occupies residues 1209 to 1229 (FILAISIFICLIVVFKFLAAL). N-linked (GlcNAc...) asparagine glycosylation is present at Asn1572.

In the N-terminal section; belongs to the TRAFAC class myosin-kinesin ATPase superfamily. Myosin family. This sequence in the C-terminal section; belongs to the chitin synthase family. Class V subfamily.

It is found in the cell membrane. The protein resides in the cell septum. The protein localises to the cell tip. It carries out the reaction [(1-&gt;4)-N-acetyl-beta-D-glucosaminyl](n) + UDP-N-acetyl-alpha-D-glucosamine = [(1-&gt;4)-N-acetyl-beta-D-glucosaminyl](n+1) + UDP + H(+). Its function is as follows. Polymerizes chitin, a structural polymer of the cell wall and septum, by transferring the sugar moiety of UDP-GlcNAc to the non-reducing end of the growing chitin polymer. Acts as the major chitin synthase in Aspergillus niger involved in cell wall integrity which is principally responsible for chitin synthesis at the lateral cell wall. Plays an important role in septal growth or maintenance. Mediates colony spore formation. The chain is Chitin synthase csmA from Aspergillus niger (strain ATCC MYA-4892 / CBS 513.88 / FGSC A1513).